Here is a 1500-residue protein sequence, read N- to C-terminus: Myosin-8 (1500 aa).

The Myosin N-terminal SH3-like domain maps to 8 to 57 (AVGSHVWVEDPDEAWLDGEVVEINGDQIKVLCASGKQVVVKDSNIYPKDV). The 671-residue stretch at 62–732 (SGVEDMTRLA…QMADLDTRRT (671 aa)) folds into the Myosin motor domain. Residues 156-163 (GESGAGKT) and 210-218 (NNNSSRFGK) each bind ATP. Actin-binding regions lie at residues 496 to 530 (LIEK…YQTY), 532 to 555 (NHKR…AGDV), 590 to 613 (FPPV…KQQL), and 613 to 635 (LVSL…KPNN). 6 IQ domains span residues 735–764 (LGRS…SATQ), 758–787 (LRIS…EAAA), 783–812 (REAA…ATIL), 806–835 (LFSA…TKAA), 831–860 (QTKA…AAIT), and 854–883 (LKKA…AARE). The stretch at 884-1049 (TGALQEAKNK…TEKQIMLQQT (166 aa)) forms a coiled coil. The 302-residue stretch at 1146 to 1447 (DRLIEMIGSA…ISSMRALMTE (302 aa)) folds into the Dilute domain.

This sequence belongs to the TRAFAC class myosin-kinesin ATPase superfamily. Myosin family. Plant myosin class XI subfamily. As to quaternary structure, homodimer.

It localises to the cytoplasm. Its function is as follows. Myosin heavy chain that is required for the cell cycle-regulated transport of various organelles and proteins for their segregation. Functions by binding with its tail domain to receptor proteins on organelles and exerting force with its N-terminal motor domain against actin filaments, thereby transporting its cargo along polarized actin cables. This is Myosin-8 (XI-B) from Arabidopsis thaliana (Mouse-ear cress).